The following is a 464-amino-acid chain: tRNA modification GTPase MnmE (464 aa).

(6S)-5-formyl-5,6,7,8-tetrahydrofolate is bound by residues R28, E90, and R129. Residues G226–F385 enclose the TrmE-type G domain. Residue N236 coordinates K(+). Residues N236–S241, T255–T261, and D280–G283 each bind GTP. Position 240 (S240) interacts with Mg(2+). The K(+) site is built by T255, I257, and T260. T261 lines the Mg(2+) pocket. K464 is a (6S)-5-formyl-5,6,7,8-tetrahydrofolate binding site.

It belongs to the TRAFAC class TrmE-Era-EngA-EngB-Septin-like GTPase superfamily. TrmE GTPase family. Homodimer. Heterotetramer of two MnmE and two MnmG subunits. K(+) serves as cofactor.

It is found in the cytoplasm. Its function is as follows. Exhibits a very high intrinsic GTPase hydrolysis rate. Involved in the addition of a carboxymethylaminomethyl (cmnm) group at the wobble position (U34) of certain tRNAs, forming tRNA-cmnm(5)s(2)U34. This is tRNA modification GTPase MnmE from Ligilactobacillus salivarius (strain UCC118) (Lactobacillus salivarius).